The primary structure comprises 264 residues: Glutamate racemase (264 aa).

Residues 10–11 and 42–43 contribute to the substrate site; these read DS and YG. Catalysis depends on cysteine 73, which acts as the Proton donor/acceptor. 74–75 is a substrate binding site; it reads NT. Cysteine 183 (proton donor/acceptor) is an active-site residue. A substrate-binding site is contributed by 184–185; that stretch reads TH.

This sequence belongs to the aspartate/glutamate racemases family.

The catalysed reaction is L-glutamate = D-glutamate. Its pathway is cell wall biogenesis; peptidoglycan biosynthesis. In terms of biological role, provides the (R)-glutamate required for cell wall biosynthesis. The protein is Glutamate racemase of Streptococcus pyogenes serotype M3 (strain ATCC BAA-595 / MGAS315).